Here is a 438-residue protein sequence, read N- to C-terminus: Serine hydroxymethyltransferase (438 aa).

(6S)-5,6,7,8-tetrahydrofolate is bound by residues Leu-133 and 137–139 (GHL). Lys-242 is modified (N6-(pyridoxal phosphate)lysine).

This sequence belongs to the SHMT family. Homodimer. Pyridoxal 5'-phosphate serves as cofactor.

It is found in the cytoplasm. The enzyme catalyses (6R)-5,10-methylene-5,6,7,8-tetrahydrofolate + glycine + H2O = (6S)-5,6,7,8-tetrahydrofolate + L-serine. Its pathway is one-carbon metabolism; tetrahydrofolate interconversion. It functions in the pathway amino-acid biosynthesis; glycine biosynthesis; glycine from L-serine: step 1/1. In terms of biological role, catalyzes the reversible interconversion of serine and glycine with tetrahydrofolate (THF) serving as the one-carbon carrier. This reaction serves as the major source of one-carbon groups required for the biosynthesis of purines, thymidylate, methionine, and other important biomolecules. Also exhibits THF-independent aldolase activity toward beta-hydroxyamino acids, producing glycine and aldehydes, via a retro-aldol mechanism. This is Serine hydroxymethyltransferase from Brucella suis (strain ATCC 23445 / NCTC 10510).